The sequence spans 352 residues: MSFTANLDRIVARAEELRASLSEGLNGDSFAAASRELAELEPVVARIEELWAAERGLAEAEAMLADPDMRELAESEAEILREKLPSLTREIRIALLPKDEADERSAILEIRPAAGGDEASLFAAQLFSMYQRYAEIRGWRFEILEYDDTGLGGLKGGMAEITGRSVFARLKYESGVHRVQRVPATESQGRIHTSTVTVAVLPEAEDVDVQVDEGDLRIDVYRASGAGGQHVNKTESAVRITHLPSGIVVAMQEEKSQHKNRAKAMKILKARLYEQQRAALHASRAADRRAQVGTGDRSERIRTYNFPQGRVSDHRINLTLYKIDRVMLGELDDFVDALTAEDQAARLSAQEL.

Q229 bears the N5-methylglutamine mark.

Belongs to the prokaryotic/mitochondrial release factor family. In terms of processing, methylated by PrmC. Methylation increases the termination efficiency of RF1.

Its subcellular location is the cytoplasm. Functionally, peptide chain release factor 1 directs the termination of translation in response to the peptide chain termination codons UAG and UAA. The polypeptide is Peptide chain release factor 1 (Granulibacter bethesdensis (strain ATCC BAA-1260 / CGDNIH1)).